The sequence spans 375 residues: 23S rRNA (uracil(747)-C(5))-methyltransferase RlmC (375 aa).

[4Fe-4S] cluster contacts are provided by Cys3, Cys11, Cys14, and Cys87. Residues Gln212, Phe241, Glu262, and Asn307 each contribute to the S-adenosyl-L-methionine site. Residue Cys334 is the Nucleophile of the active site.

It belongs to the class I-like SAM-binding methyltransferase superfamily. RNA M5U methyltransferase family. RlmC subfamily.

It carries out the reaction uridine(747) in 23S rRNA + S-adenosyl-L-methionine = 5-methyluridine(747) in 23S rRNA + S-adenosyl-L-homocysteine + H(+). Catalyzes the formation of 5-methyl-uridine at position 747 (m5U747) in 23S rRNA. In Escherichia coli (strain K12 / MC4100 / BW2952), this protein is 23S rRNA (uracil(747)-C(5))-methyltransferase RlmC.